The primary structure comprises 391 residues: Formate-dependent phosphoribosylglycinamide formyltransferase (391 aa).

Residues 20-21 (EL) and Glu-80 each bind N(1)-(5-phospho-beta-D-ribosyl)glycinamide. ATP is bound by residues Arg-112, Lys-153, 158–163 (SSGKGQ), 193–196 (EGFV), and Glu-201. An ATP-grasp domain is found at 117-306 (RLAAETLGLP…EFALHVRAIL (190 aa)). Mg(2+)-binding residues include Glu-265 and Glu-277. Residues Asp-284, Lys-354, and 361–362 (RR) contribute to the N(1)-(5-phospho-beta-D-ribosyl)glycinamide site.

Belongs to the PurK/PurT family. Homodimer.

It carries out the reaction N(1)-(5-phospho-beta-D-ribosyl)glycinamide + formate + ATP = N(2)-formyl-N(1)-(5-phospho-beta-D-ribosyl)glycinamide + ADP + phosphate + H(+). The protein operates within purine metabolism; IMP biosynthesis via de novo pathway; N(2)-formyl-N(1)-(5-phospho-D-ribosyl)glycinamide from N(1)-(5-phospho-D-ribosyl)glycinamide (formate route): step 1/1. Its function is as follows. Involved in the de novo purine biosynthesis. Catalyzes the transfer of formate to 5-phospho-ribosyl-glycinamide (GAR), producing 5-phospho-ribosyl-N-formylglycinamide (FGAR). Formate is provided by PurU via hydrolysis of 10-formyl-tetrahydrofolate. This Shewanella sp. (strain W3-18-1) protein is Formate-dependent phosphoribosylglycinamide formyltransferase.